The sequence spans 112 residues: Nitrogen regulatory protein P-II (112 aa).

Y51 carries the post-translational modification O-UMP-tyrosine.

It belongs to the P(II) protein family. Homotrimer.

In terms of biological role, P-II indirectly controls the transcription of the glutamine synthetase gene (glnA). P-II prevents NR-II-catalyzed conversion of NR-I to NR-I-phosphate, the transcriptional activator of glnA. When P-II is uridylylated to P-II-UMP, these events are reversed. When the ratio of Gln to 2-ketoglutarate decreases, P-II is uridylylated to P-II-UMP, which causes the deadenylation of glutamine synthetase, so activating the enzyme. This is Nitrogen regulatory protein P-II (glnB) from Rhodobacter capsulatus (Rhodopseudomonas capsulata).